We begin with the raw amino-acid sequence, 268 residues long: Hydroxyethylthiazole kinase (268 aa).

Substrate is bound at residue Met45. ATP is bound by residues Arg121 and Thr167. Position 194 (Gly194) interacts with substrate.

The protein belongs to the Thz kinase family. Mg(2+) serves as cofactor.

The catalysed reaction is 5-(2-hydroxyethyl)-4-methylthiazole + ATP = 4-methyl-5-(2-phosphooxyethyl)-thiazole + ADP + H(+). It participates in cofactor biosynthesis; thiamine diphosphate biosynthesis; 4-methyl-5-(2-phosphoethyl)-thiazole from 5-(2-hydroxyethyl)-4-methylthiazole: step 1/1. Catalyzes the phosphorylation of the hydroxyl group of 4-methyl-5-beta-hydroxyethylthiazole (THZ). The sequence is that of Hydroxyethylthiazole kinase from Bacillus thuringiensis (strain Al Hakam).